The sequence spans 429 residues: Probable M18 family aminopeptidase 2 (429 aa).

Residues H82, H156, and H401 each contribute to the Zn(2+) site.

This sequence belongs to the peptidase M18 family. It depends on Zn(2+) as a cofactor.

The chain is Probable M18 family aminopeptidase 2 from Stutzerimonas stutzeri (strain A1501) (Pseudomonas stutzeri).